Reading from the N-terminus, the 583-residue chain is Orphan steroid hormone receptor 2 (583 aa).

A DNA-binding region (nuclear receptor) is located at residues 84–159; sequence IELCAVCGDK…MGMKSDSVQC (76 aa). NR C4-type zinc fingers lie at residues 87–107 and 123–142; these read CAVC…CEGC and CRGN…CQYC. The NR LBD domain occupies 248–563; it reads TLASVVTSLA…SIIPYILRME (316 aa).

This sequence belongs to the nuclear hormone receptor family. NR2 subfamily. Binds DNA as a monomer. In terms of tissue distribution, expressed uniformly in the early embryo. In contrast, larval expression is localized to the epaulettes and mouth epithelium. Expressed in multiple adult organs including lantern muscle, tubefeet, intestine, coelomocytes and gonads. In the adult ovaries and testes, expression is specifically localized to the smooth muscle epithelial layer of cells which surround the ovarioles and acini, respectively (at protein level).

The protein resides in the cytoplasm. It is found in the nucleus. Orphan nuclear receptor. Binds to the hormone response element in the upstream promoter region of the CYIIIB gene in vitro. Both isoform 1 and isoform 2 bind DNA. The protein is Orphan steroid hormone receptor 2 of Strongylocentrotus purpuratus (Purple sea urchin).